The primary structure comprises 452 residues: UPF0210 protein Cthe_0410 (452 aa).

Belongs to the UPF0210 family. As to quaternary structure, homodimer.

The protein is UPF0210 protein Cthe_0410 of Acetivibrio thermocellus (strain ATCC 27405 / DSM 1237 / JCM 9322 / NBRC 103400 / NCIMB 10682 / NRRL B-4536 / VPI 7372) (Clostridium thermocellum).